A 250-amino-acid polypeptide reads, in one-letter code: Envelope glycoprotein L (250 aa).

The first 18 residues, 1 to 18 (MELLLFVMSLILLTFSKA), serve as a signal peptide directing secretion. One can recognise a gL betaherpesvirus-type domain in the interval 31–239 (KLDDCIAAVI…ETYNSKLPFR (209 aa)). Residues Cys136 and Cys141 are joined by a disulfide bond.

This sequence belongs to the herpesviridae glycoprotein L (gL) family. Betaherpesvirinae gL subfamily. Interacts with glycoprotein H (gH); this interaction is necessary for the correct processing and cell surface expression of gH. Part of a gH-gL-gO complex.

The protein localises to the virion membrane. It is found in the host cell membrane. It localises to the host Golgi apparatus. Its subcellular location is the host trans-Golgi network. Functionally, the heterodimer glycoprotein H-glycoprotein L is required for the fusion of viral and plasma membranes leading to virus entry into the host cell. Acts as a functional inhibitor of gH and maintains gH in an inhibited form. Upon binding to host integrins, gL dissociates from gH leading to activation of the viral fusion glycoproteins gB and gH. The protein is Envelope glycoprotein L of Human herpesvirus 6A (strain Uganda-1102) (HHV-6 variant A).